Here is a 394-residue protein sequence, read N- to C-terminus: MVVFSKTAALVLGLSTAVSAAPAPTRKGFTINQIARPANKTRTVNLPGLYARSLAKFGGTVPQSVKEAASKGSAVTTPQNNDEEYLTPVTVGKSTLHLDFDTGSADLWGFSDELPSSEQTGHDLYTPSSSATKLSGYSWDISYGDGSSASGDVYRDTVTVGGVTTNKQAVEAASKISSEFVQDTANDGLLGLAFSSINTVQPKAQTTFFDTVKSQLDSPLFAVQLKHDAPGVYDFGYIDDSKYTGSITYTDADSSQGYWGFSTDGYSIGDGSSSSSGFSAIADTGTTLILLDDEIVSAHYEQVSGAQESYEAGGYVFSCSTDLPDFTVVIGDYKAVVPGKYINYAPVSTGSSTCYGGIQSNSGLGLSILGDVFLKSQYVVFNSEGPKLGFAAQA.

The signal sequence occupies residues 1–20 (MVVFSKTAALVLGLSTAVSA). A propeptide spans 21–69 (APAPTRKGFTINQIARPANKTRTVNLPGLYARSLAKFGGTVPQSVKEAA) (activation peptide). Residues 85–391 (YLTPVTVGKS…NSEGPKLGFA (307 aa)) form the Peptidase A1 domain. Active-site residues include Asp101 and Asp283. A disulfide bond links Cys319 and Cys354.

It belongs to the peptidase A1 family.

Its subcellular location is the secreted. The enzyme catalyses Hydrolysis of proteins with broad specificity. Generally favors hydrophobic residues in P1 and P1', but also accepts Lys in P1, which leads to activation of trypsinogen. Does not clot milk.. Functionally, secreted aspartic endopeptidase that allows assimilation of proteinaceous substrates. The scissile peptide bond is attacked by a nucleophilic water molecule activated by two aspartic residues in the active site. Shows a broad primary substrate specificity. Favors hydrophobic residues at the P1 and P1' positions, but also accepts a lysine residue in the P1 position, leading to the activation of trypsinogen and chymotrypsinogen A. The protein is Aspergillopepsin-1 of Aspergillus niger.